Reading from the N-terminus, the 89-residue chain is Small ribosomal subunit protein bS20 (89 aa).

The tract at residues 1 to 20 is disordered; that stretch reads MANHKSAEKRARQTIKRTER.

Belongs to the bacterial ribosomal protein bS20 family.

In terms of biological role, binds directly to 16S ribosomal RNA. In Campylobacter concisus (strain 13826), this protein is Small ribosomal subunit protein bS20.